Reading from the N-terminus, the 64-residue chain is Large ribosomal subunit protein bL28 (64 aa).

It belongs to the bacterial ribosomal protein bL28 family.

This Campylobacter lari (strain RM2100 / D67 / ATCC BAA-1060) protein is Large ribosomal subunit protein bL28.